A 463-amino-acid chain; its full sequence is Argininosuccinate lyase (463 aa).

Positions 27, 115, and 161 each coordinate 2-(N(omega)-L-arginino)succinate. Histidine 162 (proton acceptor) is an active-site residue. The active-site Proton donor is serine 283. Positions 291, 323, 328, and 331 each coordinate 2-(N(omega)-L-arginino)succinate.

It belongs to the lyase 1 family. Argininosuccinate lyase subfamily. Homotetramer.

It catalyses the reaction 2-(N(omega)-L-arginino)succinate = fumarate + L-arginine. The protein operates within amino-acid biosynthesis; L-arginine biosynthesis; L-arginine from L-ornithine and carbamoyl phosphate: step 3/3. The polypeptide is Argininosuccinate lyase (ARG4) (Saccharomyces paradoxus (Yeast)).